A 507-amino-acid chain; its full sequence is Ribosomal protein uS12 methylthiotransferase RimO (507 aa).

Residues 13–124 (RRVALLTLGC…ISDRLGAVLA (112 aa)) form the MTTase N-terminal domain. [4Fe-4S] cluster contacts are provided by C22, C58, and C87. Residues 150–175 (AAVSLPGHGTRAAAAGPGGRSAPVEV) form a disordered region. Positions 155 to 172 (PGHGTRAAAAGPGGRSAP) are enriched in low complexity. The Radical SAM core domain maps to 191-422 (LDTGPVASLK…ALADELCAQR (232 aa)). C205, C209, and C212 together coordinate [4Fe-4S] cluster. The TRAM domain occupies 424-497 (EQRLGSTVQV…GVDLVAVPDG (74 aa)).

Belongs to the methylthiotransferase family. RimO subfamily. The cofactor is [4Fe-4S] cluster.

The protein localises to the cytoplasm. It catalyses the reaction L-aspartate(89)-[ribosomal protein uS12]-hydrogen + (sulfur carrier)-SH + AH2 + 2 S-adenosyl-L-methionine = 3-methylsulfanyl-L-aspartate(89)-[ribosomal protein uS12]-hydrogen + (sulfur carrier)-H + 5'-deoxyadenosine + L-methionine + A + S-adenosyl-L-homocysteine + 2 H(+). Its function is as follows. Catalyzes the methylthiolation of an aspartic acid residue of ribosomal protein uS12. This is Ribosomal protein uS12 methylthiotransferase RimO from Salinispora arenicola (strain CNS-205).